Here is a 204-residue protein sequence, read N- to C-terminus: Proteasome subunit beta (204 aa).

The propeptide at 1–8 is removed in mature form; by autocatalysis; it reads MDDKILEG. The active-site Nucleophile is the Thr9.

Belongs to the peptidase T1B family. In terms of assembly, the 20S proteasome core is composed of 14 alpha and 14 beta subunits that assemble into four stacked heptameric rings, resulting in a barrel-shaped structure. The two inner rings, each composed of seven catalytic beta subunits, are sandwiched by two outer rings, each composed of seven alpha subunits. The catalytic chamber with the active sites is on the inside of the barrel. Has a gated structure, the ends of the cylinder being occluded by the N-termini of the alpha-subunits. Is capped at one or both ends by the proteasome regulatory ATPase, PAN.

The protein localises to the cytoplasm. It carries out the reaction Cleavage of peptide bonds with very broad specificity.. With respect to regulation, the formation of the proteasomal ATPase PAN-20S proteasome complex, via the docking of the C-termini of PAN into the intersubunit pockets in the alpha-rings, triggers opening of the gate for substrate entry. Interconversion between the open-gate and close-gate conformations leads to a dynamic regulation of the 20S proteasome proteolysis activity. In terms of biological role, component of the proteasome core, a large protease complex with broad specificity involved in protein degradation. This chain is Proteasome subunit beta, found in Methanobrevibacter smithii (strain ATCC 35061 / DSM 861 / OCM 144 / PS).